Reading from the N-terminus, the 258-residue chain is Gamma carbonic anhydrase 3, mitochondrial (258 aa).

The N-terminal 43 residues, 1–43, are a transit peptide targeting the mitochondrion; the sequence is MGTMGKAFYSVGFWIRETGQALDRLGCRLQGKNHFREQLSRHR. Substrate is bound by residues 86-88 and 101-102; these read RGD and QD. Zn(2+)-binding residues include H107, H130, and H135. Position 209 (N209) interacts with substrate.

It belongs to the gamma-class carbonic anhydrase family. Homotrimer. Component of the oxidoreductase respiratory chain complex I; element of the extra matrix-exposed domain, which is attached to the membrane arm of this complex. Requires Zn(2+) as cofactor.

The protein resides in the mitochondrion membrane. In terms of biological role, enzyme involved in the catabolism of H(2)CO(3) but that does not mediates the reversible hydration of carbon dioxide. Mediates complex I assembly in mitochondria and respiration. The sequence is that of Gamma carbonic anhydrase 3, mitochondrial (GAMMACA3) from Arabidopsis thaliana (Mouse-ear cress).